The sequence spans 516 residues: D-aminopeptidase (516 aa).

Serine 61 functions as the Nucleophile in the catalytic mechanism. Residue lysine 64 is the Proton donor/acceptor of the active site. The interval 476–486 (RRSMDAPAPGD) is important for specificity. Position 480 (aspartate 480) interacts with substrate.

It belongs to the peptidase S12 family. Homodimer.

The enzyme catalyses Release of an N-terminal D-amino acid from a peptide, Xaa-|-Yaa-, in which Xaa is preferably D-Ala, D-Ser or D-Thr. D-amino acid amides and methyl esters also are hydrolyzed, as is glycine amide.. With respect to regulation, inhibited by beta-lactam compounds such as 6-aminopenicillic acid, 7-aminocephalosporanic acid, benzylpenicillin and ampicillin. Inhibited by p-chloromercuribenzoate. Functionally, hydrolyzes N-terminal residues in D-amino acid-containing peptides. The polypeptide is D-aminopeptidase (Cereibacter sphaeroides (strain ATCC 17029 / ATH 2.4.9) (Rhodobacter sphaeroides)).